The primary structure comprises 283 residues: Shikimate dehydrogenase (NADP(+)) (283 aa).

Residues 19–21 (SLS) and threonine 66 each bind shikimate. Lysine 70 (proton acceptor) is an active-site residue. Asparagine 91 and aspartate 106 together coordinate shikimate. NADP(+) is bound by residues 129–133 (GAGGA), 153–158 (NRTPEK), and leucine 224. Shikimate is bound at residue tyrosine 226. Glycine 247 contacts NADP(+).

This sequence belongs to the shikimate dehydrogenase family. Homodimer.

The enzyme catalyses shikimate + NADP(+) = 3-dehydroshikimate + NADPH + H(+). It functions in the pathway metabolic intermediate biosynthesis; chorismate biosynthesis; chorismate from D-erythrose 4-phosphate and phosphoenolpyruvate: step 4/7. Functionally, involved in the biosynthesis of the chorismate, which leads to the biosynthesis of aromatic amino acids. Catalyzes the reversible NADPH linked reduction of 3-dehydroshikimate (DHSA) to yield shikimate (SA). The chain is Shikimate dehydrogenase (NADP(+)) from Methanothermobacter thermautotrophicus (strain ATCC 29096 / DSM 1053 / JCM 10044 / NBRC 100330 / Delta H) (Methanobacterium thermoautotrophicum).